Consider the following 311-residue polypeptide: Methionyl-tRNA formyltransferase (311 aa).

A (6S)-5,6,7,8-tetrahydrofolate-binding site is contributed by 110–113 (SLLP).

This sequence belongs to the Fmt family.

It catalyses the reaction L-methionyl-tRNA(fMet) + (6R)-10-formyltetrahydrofolate = N-formyl-L-methionyl-tRNA(fMet) + (6S)-5,6,7,8-tetrahydrofolate + H(+). In terms of biological role, attaches a formyl group to the free amino group of methionyl-tRNA(fMet). The formyl group appears to play a dual role in the initiator identity of N-formylmethionyl-tRNA by promoting its recognition by IF2 and preventing the misappropriation of this tRNA by the elongation apparatus. In Streptococcus pneumoniae serotype 2 (strain D39 / NCTC 7466), this protein is Methionyl-tRNA formyltransferase.